Consider the following 83-residue polypeptide: Cytochrome b559 subunit alpha (83 aa).

Residues 21–35 traverse the membrane as a helical segment; the sequence is VIHSITIPSLFIAGW. His-23 contributes to the heme binding site.

Belongs to the PsbE/PsbF family. Heterodimer of an alpha subunit and a beta subunit. PSII is composed of 1 copy each of membrane proteins PsbA, PsbB, PsbC, PsbD, PsbE, PsbF, PsbH, PsbI, PsbJ, PsbK, PsbL, PsbM, PsbT, PsbX, PsbY, PsbZ, Psb30/Ycf12, at least 3 peripheral proteins of the oxygen-evolving complex and a large number of cofactors. It forms dimeric complexes. Heme b serves as cofactor.

Its subcellular location is the plastid. It is found in the chloroplast thylakoid membrane. Functionally, this b-type cytochrome is tightly associated with the reaction center of photosystem II (PSII). PSII is a light-driven water:plastoquinone oxidoreductase that uses light energy to abstract electrons from H(2)O, generating O(2) and a proton gradient subsequently used for ATP formation. It consists of a core antenna complex that captures photons, and an electron transfer chain that converts photonic excitation into a charge separation. The sequence is that of Cytochrome b559 subunit alpha from Huperzia lucidula (Shining clubmoss).